Here is a 61-residue protein sequence, read N- to C-terminus: Small ribosomal subunit protein uS14 (61 aa).

Positions 24, 27, 40, and 43 each coordinate Zn(2+).

This sequence belongs to the universal ribosomal protein uS14 family. Zinc-binding uS14 subfamily. As to quaternary structure, part of the 30S ribosomal subunit. Contacts proteins S3 and S10. Requires Zn(2+) as cofactor.

Functionally, binds 16S rRNA, required for the assembly of 30S particles and may also be responsible for determining the conformation of the 16S rRNA at the A site. This Lachnospira eligens (strain ATCC 27750 / DSM 3376 / VPI C15-48 / C15-B4) (Eubacterium eligens) protein is Small ribosomal subunit protein uS14.